Consider the following 466-residue polypeptide: Ribulose bisphosphate carboxylase large chain (466 aa).

At K4 the chain carries N6,N6,N6-trimethyllysine. Substrate-binding residues include N113 and T163. The active-site Proton acceptor is the K165. Position 167 (K167) interacts with substrate. Positions 191, 193, and 194 each coordinate Mg(2+). K191 bears the N6-carboxylysine mark. The active-site Proton acceptor is H284. Residues R285, H317, and S369 each contribute to the substrate site.

It belongs to the RuBisCO large chain family. Type I subfamily. Heterohexadecamer of 8 large chains and 8 small chains; disulfide-linked. The disulfide link is formed within the large subunit homodimers. Mg(2+) serves as cofactor. The disulfide bond which can form in the large chain dimeric partners within the hexadecamer appears to be associated with oxidative stress and protein turnover.

It is found in the plastid. The protein resides in the chloroplast. It catalyses the reaction 2 (2R)-3-phosphoglycerate + 2 H(+) = D-ribulose 1,5-bisphosphate + CO2 + H2O. The enzyme catalyses D-ribulose 1,5-bisphosphate + O2 = 2-phosphoglycolate + (2R)-3-phosphoglycerate + 2 H(+). RuBisCO catalyzes two reactions: the carboxylation of D-ribulose 1,5-bisphosphate, the primary event in carbon dioxide fixation, as well as the oxidative fragmentation of the pentose substrate in the photorespiration process. Both reactions occur simultaneously and in competition at the same active site. This chain is Ribulose bisphosphate carboxylase large chain, found in Proboscidea louisianica (Louisiana Devil's-claw).